Consider the following 123-residue polypeptide: Holo-[acyl-carrier-protein] synthase (123 aa).

2 residues coordinate Mg(2+): Asp8 and Glu60.

This sequence belongs to the P-Pant transferase superfamily. AcpS family. It depends on Mg(2+) as a cofactor.

It is found in the cytoplasm. It catalyses the reaction apo-[ACP] + CoA = holo-[ACP] + adenosine 3',5'-bisphosphate + H(+). Functionally, transfers the 4'-phosphopantetheine moiety from coenzyme A to a Ser of acyl-carrier-protein. This chain is Holo-[acyl-carrier-protein] synthase, found in Ehrlichia chaffeensis (strain ATCC CRL-10679 / Arkansas).